The following is a 455-amino-acid chain: Bifunctional protein GlmU (455 aa).

The pyrophosphorylase stretch occupies residues 1-229; it reads MYNCAILLAA…FEETMGVNSR (229 aa). UDP-N-acetyl-alpha-D-glucosamine is bound by residues 8–11, lysine 22, glutamine 73, and 78–79; these read LAAG and GT. Aspartate 103 lines the Mg(2+) pocket. UDP-N-acetyl-alpha-D-glucosamine contacts are provided by glycine 140, glutamate 155, asparagine 170, and asparagine 227. Asparagine 227 contacts Mg(2+). The linker stretch occupies residues 230–250; it reads LQLAEVEAIMRKRINAMHLEN. The tract at residues 251–455 is N-acetyltransferase; sequence GVTIIDPNNT…EDWVKKKDEK (205 aa). The UDP-N-acetyl-alpha-D-glucosamine site is built by arginine 332 and lysine 350. Histidine 362 acts as the Proton acceptor in catalysis. UDP-N-acetyl-alpha-D-glucosamine contacts are provided by tyrosine 365 and asparagine 376. Acetyl-CoA-binding positions include 385 to 386, alanine 422, and arginine 439; that span reads NY.

The protein in the N-terminal section; belongs to the N-acetylglucosamine-1-phosphate uridyltransferase family. This sequence in the C-terminal section; belongs to the transferase hexapeptide repeat family. As to quaternary structure, homotrimer. The cofactor is Mg(2+).

It is found in the cytoplasm. The catalysed reaction is alpha-D-glucosamine 1-phosphate + acetyl-CoA = N-acetyl-alpha-D-glucosamine 1-phosphate + CoA + H(+). It carries out the reaction N-acetyl-alpha-D-glucosamine 1-phosphate + UTP + H(+) = UDP-N-acetyl-alpha-D-glucosamine + diphosphate. The protein operates within nucleotide-sugar biosynthesis; UDP-N-acetyl-alpha-D-glucosamine biosynthesis; N-acetyl-alpha-D-glucosamine 1-phosphate from alpha-D-glucosamine 6-phosphate (route II): step 2/2. It participates in nucleotide-sugar biosynthesis; UDP-N-acetyl-alpha-D-glucosamine biosynthesis; UDP-N-acetyl-alpha-D-glucosamine from N-acetyl-alpha-D-glucosamine 1-phosphate: step 1/1. Its pathway is bacterial outer membrane biogenesis; LPS lipid A biosynthesis. Catalyzes the last two sequential reactions in the de novo biosynthetic pathway for UDP-N-acetylglucosamine (UDP-GlcNAc). The C-terminal domain catalyzes the transfer of acetyl group from acetyl coenzyme A to glucosamine-1-phosphate (GlcN-1-P) to produce N-acetylglucosamine-1-phosphate (GlcNAc-1-P), which is converted into UDP-GlcNAc by the transfer of uridine 5-monophosphate (from uridine 5-triphosphate), a reaction catalyzed by the N-terminal domain. This Clostridium tetani (strain Massachusetts / E88) protein is Bifunctional protein GlmU.